A 280-amino-acid chain; its full sequence is Retinoschisin (280 aa).

The first 23 residues, 1–23 (MHLPREAFLLALAGAFIFPSSQQ), serve as a signal peptide directing secretion. Residues 119 to 275 (CPYHRPLGFE…IALRLELLLC (157 aa)) form the F5/8 type C domain. 2 disulfide bridges follow: cysteine 119/cysteine 275 and cysteine 166/cysteine 198.

In terms of assembly, homooctamer of 4 homodimers; disulfide-linked. The homooctamer has a flat, cogwheel structure with a diameter of about 14 nm. Two stacked octamers can assemble to form a hexadecamer.

The protein resides in the secreted. It localises to the cell membrane. Binds negatively charged membrane lipids, such as phosphatidylserine and phosphoinositides. May play a role in cell-cell adhesion processes in the retina, via homomeric interaction between octamers present on the surface of two neighboring cells. Required for normal structure and function of the retina. This Takifugu rubripes (Japanese pufferfish) protein is Retinoschisin (xlrs1).